The primary structure comprises 278 residues: Dermonecrotic toxin LbSicTox-betaIA1a (278 aa).

Residue H12 is part of the active site. Mg(2+) is bound by residues E32 and D34. H48 (nucleophile) is an active-site residue. 2 disulfides stabilise this stretch: C52–C58 and C54–C197. D92 contributes to the Mg(2+) binding site. N258 is a glycosylation site (N-linked (GlcNAc...) asparagine).

It belongs to the arthropod phospholipase D family. Class II subfamily. Class IIb sub-subfamily. As to expression, expressed by the venom gland.

It is found in the secreted. The enzyme catalyses an N-(acyl)-sphingosylphosphoethanolamine = an N-(acyl)-sphingosyl-1,3-cyclic phosphate + ethanolamine. It catalyses the reaction a 1-acyl-sn-glycero-3-phosphocholine = a 1-acyl-sn-glycero-2,3-cyclic phosphate + choline. It carries out the reaction a 1-acyl-sn-glycero-3-phosphoethanolamine = a 1-acyl-sn-glycero-2,3-cyclic phosphate + ethanolamine. Its function is as follows. This toxin does not show activity on sphingomyelin (SM) and does not show dermonecrotic activities. This toxin is a member of dermonecrotic toxins that cleave the phosphodiester linkage between the phosphate and headgroup of certain phospholipids (sphingolipid and lysolipid substrates), forming an alcohol (often choline) and a cyclic phosphate. It may act on ceramide phosphoethanolamine (CPE), lysophosphatidylcholine (LPC) and lysophosphatidylethanolamine (LPE), but not on lysophosphatidylserine (LPS), and lysophosphatidylglycerol (LPG). It may act by transphosphatidylation, releasing exclusively cyclic phosphate products as second products. In Loxosceles boneti (North American fiddleback spider), this protein is Dermonecrotic toxin LbSicTox-betaIA1a.